A 326-amino-acid chain; its full sequence is Large ribosomal subunit protein uL4 (326 aa).

A large ribosomal subunit protein uL4 region spans residues 1–211 (MASCVVKNWQ…EKLKARWGSG (211 aa)). Disordered regions lie at residues 44–76 (ARQG…ARAG) and 211–326 (GAAA…EDND). A compositionally biased stretch (basic residues) spans 60-71 (GGRKPWRQKGTG). The unknown stretch occupies residues 212–326 (AAAAAPTQAD…TAAAEEEDND (115 aa)). Positions 221–238 (DRLEDQAQAAEREARPVE) are enriched in basic and acidic residues. Low complexity-rich tracts occupy residues 252–279 (EAQA…QVQE) and 294–312 (QGQA…PPAG). Positions 313-326 (EEAETAAAEEEDND) are enriched in acidic residues.

It belongs to the universal ribosomal protein uL4 family. Part of the 50S ribosomal subunit.

Its function is as follows. One of the primary rRNA binding proteins, this protein initially binds near the 5'-end of the 23S rRNA. It is important during the early stages of 50S assembly. It makes multiple contacts with different domains of the 23S rRNA in the assembled 50S subunit and ribosome. In terms of biological role, forms part of the polypeptide exit tunnel. The sequence is that of Large ribosomal subunit protein uL4 from Synechococcus sp. (strain JA-3-3Ab) (Cyanobacteria bacterium Yellowstone A-Prime).